A 257-amino-acid chain; its full sequence is Uxu operon transcriptional regulator (257 aa).

Residues Q8–N76 form the HTH gntR-type domain. The segment at residues E36–I55 is a DNA-binding region (H-T-H motif).

In terms of biological role, repressor for the uxuRBA operon. This is Uxu operon transcriptional regulator (uxuR) from Escherichia coli (strain K12).